The following is a 271-amino-acid chain: Calretinin (271 aa).

EF-hand domains lie at Leu-16–Ala-51, Asn-63–Phe-98, Gly-107–Lys-142, Lys-151–Phe-186, Leu-195–Lys-230, and Met-235–Pro-270. The Ca(2+) site is built by Asp-29, Asp-31, Asn-33, Tyr-35, Glu-40, Asp-76, Asn-78, Asp-80, Lys-82, Glu-87, Asp-120, Asp-122, Ser-124, Tyr-126, Glu-131, Asp-164, Asn-166, Asp-168, Lys-170, Glu-175, Asp-208, Asp-210, Ser-212, Tyr-214, and Glu-219. Phosphotyrosine is present on Tyr-214.

This sequence belongs to the calbindin family.

It is found in the synapse. The protein localises to the cell projection. It localises to the dendrite. Functionally, calcium-binding protein involved in calcium homeostasis and signal transduction. It plays a critical role in buffering intracellular calcium levels and modulating calcium-dependent signaling pathways. Predominantly expressed in specific neuronal populations, influences synaptic plasticity and neuronal excitability, contributing to learning and memory. During embryonic development, it facilitates neuronal differentiation and maturation. The chain is Calretinin (Calb2) from Rattus norvegicus (Rat).